Consider the following 449-residue polypeptide: 23S rRNA (uracil(1939)-C(5))-methyltransferase RlmD (449 aa).

Positions 12-70 (SKQLSAKQSFSVHQLDHLGAGIAQHQGKVVFIPGALPSETVQAQLTEQKKNYARAKLIK) constitute a TRAM domain. Positions 83, 89, 92, and 170 each coordinate [4Fe-4S] cluster. Residues Q282, F311, N316, E332, D359, and D379 each coordinate S-adenosyl-L-methionine. C405 acts as the Nucleophile in catalysis.

The protein belongs to the class I-like SAM-binding methyltransferase superfamily. RNA M5U methyltransferase family. RlmD subfamily.

The catalysed reaction is uridine(1939) in 23S rRNA + S-adenosyl-L-methionine = 5-methyluridine(1939) in 23S rRNA + S-adenosyl-L-homocysteine + H(+). Its function is as follows. Catalyzes the formation of 5-methyl-uridine at position 1939 (m5U1939) in 23S rRNA. This chain is 23S rRNA (uracil(1939)-C(5))-methyltransferase RlmD, found in Shewanella sp. (strain MR-7).